The following is a 337-amino-acid chain: NADH-quinone oxidoreductase subunit H (337 aa).

The next 9 helical transmembrane spans lie at 9–29, 50–70, 82–102, 115–135, 161–181, 186–206, 245–265, 273–293, and 313–333; these read GIPLAIIAAQSLALIVALLLV, PNVVGAFGLLQSFADLLKFVF, GIFLLAPLVTVVLALSGWAVI, VGILYIFAISSLGVYGVIMAG, IGFVIVCVLMTAGSLNLTAIV, TIWYFIPHLPMFVIFFISALA, SILLMCAMTTILFLGGWLPPI, VPGVIWFLLKVFLVFFMFAMV, and FLPISLFWVVLTAGVLVGFDI.

It belongs to the complex I subunit 1 family. In terms of assembly, NDH-1 is composed of 14 different subunits. Subunits NuoA, H, J, K, L, M, N constitute the membrane sector of the complex.

Its subcellular location is the cell inner membrane. It catalyses the reaction a quinone + NADH + 5 H(+)(in) = a quinol + NAD(+) + 4 H(+)(out). NDH-1 shuttles electrons from NADH, via FMN and iron-sulfur (Fe-S) centers, to quinones in the respiratory chain. The immediate electron acceptor for the enzyme in this species is believed to be ubiquinone. Couples the redox reaction to proton translocation (for every two electrons transferred, four hydrogen ions are translocated across the cytoplasmic membrane), and thus conserves the redox energy in a proton gradient. This subunit may bind ubiquinone. The chain is NADH-quinone oxidoreductase subunit H from Parvibaculum lavamentivorans (strain DS-1 / DSM 13023 / NCIMB 13966).